Consider the following 308-residue polypeptide: Ribosomal protein L11 methyltransferase (308 aa).

Positions 160, 181, 203, and 245 each coordinate S-adenosyl-L-methionine.

The protein belongs to the methyltransferase superfamily. PrmA family.

It is found in the cytoplasm. The catalysed reaction is L-lysyl-[protein] + 3 S-adenosyl-L-methionine = N(6),N(6),N(6)-trimethyl-L-lysyl-[protein] + 3 S-adenosyl-L-homocysteine + 3 H(+). In terms of biological role, methylates ribosomal protein L11. This Thermoanaerobacter pseudethanolicus (strain ATCC 33223 / 39E) (Clostridium thermohydrosulfuricum) protein is Ribosomal protein L11 methyltransferase.